The following is a 426-amino-acid chain: UDP-N-acetylglucosamine 1-carboxyvinyltransferase (426 aa).

Lysine 22–asparagine 23 provides a ligand contact to phosphoenolpyruvate. Position 94 (arginine 94) interacts with UDP-N-acetyl-alpha-D-glucosamine. Cysteine 118 acts as the Proton donor in catalysis. The residue at position 118 (cysteine 118) is a 2-(S-cysteinyl)pyruvic acid O-phosphothioketal. UDP-N-acetyl-alpha-D-glucosamine is bound by residues arginine 123 to leucine 127, aspartate 309, and isoleucine 331.

This sequence belongs to the EPSP synthase family. MurA subfamily.

It is found in the cytoplasm. It catalyses the reaction phosphoenolpyruvate + UDP-N-acetyl-alpha-D-glucosamine = UDP-N-acetyl-3-O-(1-carboxyvinyl)-alpha-D-glucosamine + phosphate. Its pathway is cell wall biogenesis; peptidoglycan biosynthesis. Its function is as follows. Cell wall formation. Adds enolpyruvyl to UDP-N-acetylglucosamine. In Paracoccus denitrificans (strain Pd 1222), this protein is UDP-N-acetylglucosamine 1-carboxyvinyltransferase.